The following is an 847-amino-acid chain: B-cell receptor CD22 (847 aa).

An N-terminal signal peptide occupies residues 1 to 19 (MHLLGPWLLLLVLEYLAFC). An Ig-like V-type domain is found at 20 to 138 (DSSKWAFEHP…MERIHLNVSE (119 aa)). Topologically, residues 20–687 (DSSKWAFEHP…YYSPETIGRR (668 aa)) are extracellular. N-linked (GlcNAc...) asparagine glycans are attached at residues N67, N101, and N112. Residue R120 coordinates N-acetylneuraminate. Residues N135, N164, N231, N295, N363, N428, N445, N448, and N479 are each glycosylated (N-linked (GlcNAc...) asparagine). 6 consecutive Ig-like C2-type domains span residues 143-235 (PHIQ…DTVQ), 242-324 (PKLE…AEVF), 331-416 (PEPS…LDVQ), 419-500 (PKKV…VALN), 505-582 (PRDV…QTAS), and 593-676 (PRRL…STLN). C161 and C219 are joined by a disulfide. Disulfide bonds link C265/C309 and C353/C396. Disulfide bonds link C442–C484 and C529–C571. N574 and N634 each carry an N-linked (GlcNAc...) asparagine glycan. A disulfide bond links C616 and C659. The chain crosses the membrane as a helical span at residues 688-708 (VAVGLGSCLAILILAICGLKL). Residues 709–847 (QRRWKRTQSQ…ENVDYVILKH (139 aa)) lie on the Cytoplasmic side of the membrane. Phosphoserine occurs at positions 725, 726, and 729. Short sequence motifs (ITIM motif) lie at residues 760–765 (ISYTTL) and 794–799 (VTYSVL). Y762 is subject to Phosphotyrosine. Residues Y807, Y822, and Y842 each carry the phosphotyrosine modification. 2 consecutive short sequence motifs (ITIM motif) follow at residues 820 to 825 (IHYSEL) and 840 to 845 (VDYVIL).

The protein belongs to the immunoglobulin superfamily. SIGLEC (sialic acid binding Ig-like lectin) family. As to quaternary structure, predominantly monomer of isoform CD22-beta. Also found as heterodimer of isoform CD22-beta and a shorter isoform. Interacts with PTPN6/SHP-1, LYN, SYK, PIK3R1/PIK3R2 and PLCG1 upon phosphorylation. Interacts with GRB2, INPP5D and SHC1 upon phosphorylation. May form a complex with INPP5D/SHIP, GRB2 and SHC1. In terms of processing, phosphorylation of Tyr-762, Tyr-807 and Tyr-822 are involved in binding to SYK, GRB2 and SYK, respectively. Phosphorylation of Tyr-842 is involved in binding to SYK, PLCG2 and PIK3R1/PIK3R2. Phosphorylated on tyrosine residues by LYN.

It localises to the cell membrane. Functionally, most highly expressed siglec (sialic acid-binding immunoglobulin-like lectin) on B-cells that plays a role in various aspects of B-cell biology including differentiation, antigen presentation, and trafficking to bone marrow. Binds to alpha 2,6-linked sialic acid residues of surface molecules such as CD22 itself, CD45 and IgM in a cis configuration. Can also bind to ligands on other cells as an adhesion molecule in a trans configuration. Acts as an inhibitory coreceptor on the surface of B-cells and inhibits B-cell receptor induced signaling, characterized by inhibition of the calcium mobilization and cellular activation. Mechanistically, the immunoreceptor tyrosine-based inhibitory motif domain is phosphorylated by the Src kinase LYN, which in turn leads to the recruitment of the protein tyrosine phosphatase 1/PTPN6, leading to the negative regulation of BCR signaling. If this negative signaling from is of sufficient strength, apoptosis of the B-cell can be induced. This chain is B-cell receptor CD22, found in Gorilla gorilla gorilla (Western lowland gorilla).